The following is a 218-amino-acid chain: Octanoyltransferase (218 aa).

The BPL/LPL catalytic domain maps to 31 to 206 (EETPDEVWLV…ELVNLLGYEQ (176 aa)). Residues 70–77 (RGGQVTYH), 137–139 (SLG), and 150–152 (GLA) each bind substrate. Cys-168 functions as the Acyl-thioester intermediate in the catalytic mechanism.

Belongs to the LipB family.

The protein localises to the cytoplasm. It catalyses the reaction octanoyl-[ACP] + L-lysyl-[protein] = N(6)-octanoyl-L-lysyl-[protein] + holo-[ACP] + H(+). Its pathway is protein modification; protein lipoylation via endogenous pathway; protein N(6)-(lipoyl)lysine from octanoyl-[acyl-carrier-protein]: step 1/2. Catalyzes the transfer of endogenously produced octanoic acid from octanoyl-acyl-carrier-protein onto the lipoyl domains of lipoate-dependent enzymes. Lipoyl-ACP can also act as a substrate although octanoyl-ACP is likely to be the physiological substrate. The chain is Octanoyltransferase from Vibrio vulnificus (strain CMCP6).